Reading from the N-terminus, the 91-residue chain is Probable protein E5A (91 aa).

The protein belongs to the papillomaviridae E5A protein family.

This chain is Probable protein E5A, found in Human papillomavirus type 6b.